Reading from the N-terminus, the 400-residue chain is Glutamyl-tRNA reductase (400 aa).

Residues 45-48 (TCNR), Ser-103, 108-110 (EDQ), and Gln-114 each bind substrate. The active-site Nucleophile is Cys-46. Position 179 to 184 (179 to 184 (GYGEIG)) interacts with NADP(+).

This sequence belongs to the glutamyl-tRNA reductase family. In terms of assembly, homodimer.

The catalysed reaction is (S)-4-amino-5-oxopentanoate + tRNA(Glu) + NADP(+) = L-glutamyl-tRNA(Glu) + NADPH + H(+). The protein operates within porphyrin-containing compound metabolism; protoporphyrin-IX biosynthesis; 5-aminolevulinate from L-glutamyl-tRNA(Glu): step 1/2. Functionally, catalyzes the NADPH-dependent reduction of glutamyl-tRNA(Glu) to glutamate 1-semialdehyde (GSA). This chain is Glutamyl-tRNA reductase, found in Clostridium perfringens (strain SM101 / Type A).